Consider the following 720-residue polypeptide: Polyribonucleotide nucleotidyltransferase (720 aa).

Mg(2+)-binding residues include Asp485 and Asp491. A KH domain is found at 552–615; that stretch reads PRIHTIKINP…EAIRRIQALT (64 aa). One can recognise an S1 motif domain in the interval 621 to 689; that stretch reads GRIYEGKVTR…RQGRIRLSIK (69 aa). The tract at residues 697 to 720 is disordered; sequence PAAESVAESAPAQEAVVEQVPMTE. A compositionally biased stretch (low complexity) spans 698–720; it reads AAESVAESAPAQEAVVEQVPMTE.

It belongs to the polyribonucleotide nucleotidyltransferase family. In terms of assembly, component of the RNA degradosome, which is a multiprotein complex involved in RNA processing and mRNA degradation. Requires Mg(2+) as cofactor.

The protein resides in the cytoplasm. The catalysed reaction is RNA(n+1) + phosphate = RNA(n) + a ribonucleoside 5'-diphosphate. Involved in mRNA degradation. Catalyzes the phosphorolysis of single-stranded polyribonucleotides processively in the 3'- to 5'-direction. The chain is Polyribonucleotide nucleotidyltransferase from Tolumonas auensis (strain DSM 9187 / NBRC 110442 / TA 4).